The sequence spans 85 residues: Large ribosomal subunit protein bL27 (85 aa).

The tract at residues 1-24 is disordered; it reads MAHKKGVGSSRNGRDSDGQRLGCK.

This sequence belongs to the bacterial ribosomal protein bL27 family.

The chain is Large ribosomal subunit protein bL27 from Geotalea daltonii (strain DSM 22248 / JCM 15807 / FRC-32) (Geobacter daltonii).